We begin with the raw amino-acid sequence, 505 residues long: Glycerol kinase (505 aa).

An ADP-binding site is contributed by Thr-12. Residues Thr-12, Thr-13, and Ser-14 each contribute to the ATP site. Thr-12 contacts sn-glycerol 3-phosphate. Residue Arg-16 coordinates ADP. Sn-glycerol 3-phosphate is bound by residues Arg-82, Glu-83, Tyr-134, and Asp-246. Glycerol is bound by residues Arg-82, Glu-83, Tyr-134, Asp-246, and Gln-247. 2 residues coordinate ADP: Thr-268 and Gly-312. Residues Thr-268, Gly-312, Gln-316, and Gly-413 each coordinate ATP. ADP contacts are provided by Gly-413 and Asn-417.

This sequence belongs to the FGGY kinase family.

It catalyses the reaction glycerol + ATP = sn-glycerol 3-phosphate + ADP + H(+). It functions in the pathway polyol metabolism; glycerol degradation via glycerol kinase pathway; sn-glycerol 3-phosphate from glycerol: step 1/1. Its activity is regulated as follows. Inhibited by fructose 1,6-bisphosphate (FBP). Key enzyme in the regulation of glycerol uptake and metabolism. Catalyzes the phosphorylation of glycerol to yield sn-glycerol 3-phosphate. This is Glycerol kinase from Beutenbergia cavernae (strain ATCC BAA-8 / DSM 12333 / CCUG 43141 / JCM 11478 / NBRC 16432 / NCIMB 13614 / HKI 0122).